A 734-amino-acid polypeptide reads, in one-letter code: Methylcrotonoyl-CoA carboxylase subunit alpha, mitochondrial (734 aa).

Residues 1–25 (MSMMTVWALRRNVRRKNHSMLVRYI) constitute a mitochondrion transit peptide. A Biotin carboxylation domain is found at 37-484 (CIEKILVANR…ETHFIEHHKS (448 aa)). Positions 152, 236, and 271 each coordinate ATP. Positions 156–354 (KRIMGAAGVP…LVEWQIRVAN (199 aa)) constitute an ATP-grasp domain. Mn(2+) contacts are provided by glutamate 311, glutamate 325, and asparagine 327. Arginine 329 is an active-site residue. Serine 645 bears the Phosphoserine mark. The disordered stretch occupies residues 645-666 (SEDEEGVQHRTSSETSSHPPGT). Residues 657–733 (SETSSHPPGT…SDGSALFRIK (77 aa)) enclose the Biotinyl-binding domain. Lysine 699 bears the N6-biotinyllysine mark.

Probably a heterodimer composed of biotin-containing alpha subunits and beta subunits. Biotin is required as a cofactor. Requires Mn(2+) as cofactor. In terms of tissue distribution, in roots, cotyledons, leaves, flowers, ovaries, siliques and embryos.

It localises to the mitochondrion matrix. The catalysed reaction is 3-methylbut-2-enoyl-CoA + hydrogencarbonate + ATP = 3-methyl-(2E)-glutaconyl-CoA + ADP + phosphate + H(+). It participates in amino-acid degradation; L-leucine degradation; (S)-3-hydroxy-3-methylglutaryl-CoA from 3-isovaleryl-CoA: step 2/3. Biotin-attachment subunit of the 3-methylcrotonyl-CoA carboxylase, an enzyme that catalyzes the conversion of 3-methylcrotonyl-CoA to 3-methylglutaconyl-CoA, a critical step for leucine and isovaleric acid catabolism. This Arabidopsis thaliana (Mouse-ear cress) protein is Methylcrotonoyl-CoA carboxylase subunit alpha, mitochondrial (MCCA).